A 223-amino-acid chain; its full sequence is Probable tRNA-splicing endonuclease subunit tsp-1 (223 aa).

Positions 1-55 are disordered; that stretch reads MESGSTPPTDKQIRENEQDGTGHQGKLLARPTSTRQQQQQQQQQPSHSVSQSVSQ. Low complexity predominate over residues 30–55; the sequence is RPTSTRQQQQQQQQQPSHSVSQSVSQ.

It belongs to the SEN15 family. As to quaternary structure, tRNA splicing endonuclease is a heterotetramer composed of tsp-2/sen2, tsp-1/sen15, tsp-4/sen34 and tsp-5/sen54. Interacts directly with tsp-4/sen34.

Its function is as follows. Non-catalytic subunit of the tRNA-splicing endonuclease complex, a complex responsible for identification and cleavage of the splice sites in pre-tRNA. It cleaves pre-tRNA at the 5' and 3' splice sites to release the intron. The products are an intron and two tRNA half-molecules bearing 2',3' cyclic phosphate and 5'-OH termini. There are no conserved sequences at the splice sites, but the intron is invariably located at the same site in the gene, placing the splice sites an invariant distance from the constant structural features of the tRNA body. The chain is Probable tRNA-splicing endonuclease subunit tsp-1 (tsp-1) from Neurospora crassa (strain ATCC 24698 / 74-OR23-1A / CBS 708.71 / DSM 1257 / FGSC 987).